Here is a 203-residue protein sequence, read N- to C-terminus: E3 ubiquitin-protein ligase RNF152 (203 aa).

An RING-type zinc finger spans residues C12–R55. Residues I106–T165 form a necessary for interaction with RRAGA region. Residues Q139–R158 form a disordered region. The helical transmembrane segment at S167–L187 threads the bilayer.

This sequence belongs to the RNF152 family. Interacts with RRAGA (inactive GDP-bound form); stimulated by amino acid starvation. Interacts with SEC16A. Ubiquitinated. Autoubiquitinated in vitro, leading to its degradation by the proteasome.

It localises to the lysosome membrane. It carries out the reaction S-ubiquitinyl-[E2 ubiquitin-conjugating enzyme]-L-cysteine + [acceptor protein]-L-lysine = [E2 ubiquitin-conjugating enzyme]-L-cysteine + N(6)-ubiquitinyl-[acceptor protein]-L-lysine.. It functions in the pathway protein modification; protein ubiquitination. Functionally, E3 ubiquitin-protein ligase that acts as a negative regulator of mTORC1 signaling by mediating ubiquitination of RagA/RRAGA and RHEB. Catalyzes 'Lys-63'-linked polyubiquitination of RagA/RRAGA in response to amino acid starvation, thereby regulating mTORC1 signaling. Also mediates monoubiquitination of RHEB, promoting its association with the TSC-TBC complex and subsequent inhibition. Also mediates 'Lys-48'-linked polyubiquitination of target proteins and their subsequent targeting to the proteasome for degradation. Induces apoptosis when overexpressed. The chain is E3 ubiquitin-protein ligase RNF152 from Mus musculus (Mouse).